We begin with the raw amino-acid sequence, 527 residues long: Glucose-6-phosphate isomerase (527 aa).

Glu323 acts as the Proton donor in catalysis. Residues His352 and Lys454 contribute to the active site.

Belongs to the GPI family.

Its subcellular location is the cytoplasm. The enzyme catalyses alpha-D-glucose 6-phosphate = beta-D-fructose 6-phosphate. Its pathway is carbohydrate biosynthesis; gluconeogenesis. It participates in carbohydrate degradation; glycolysis; D-glyceraldehyde 3-phosphate and glycerone phosphate from D-glucose: step 2/4. In terms of biological role, catalyzes the reversible isomerization of glucose-6-phosphate to fructose-6-phosphate. This Prochlorococcus marinus (strain MIT 9312) protein is Glucose-6-phosphate isomerase.